The chain runs to 287 residues: UPF0725 protein At1g19060 (287 aa).

The protein belongs to the UPF0725 (EMB2204) family.

The polypeptide is UPF0725 protein At1g19060 (Arabidopsis thaliana (Mouse-ear cress)).